Consider the following 351-residue polypeptide: Heat shock factor protein HSF30 (351 aa).

The DNA-binding element occupies 29–123 (PPPFLSKTYE…LLKTIKRRRN (95 aa)).

It belongs to the HSF family. Homotrimer. Post-translationally, exhibits temperature-dependent phosphorylation.

The protein resides in the nucleus. In terms of biological role, DNA-binding protein that specifically binds heat shock promoter elements (HSE) and activates transcription. The chain is Heat shock factor protein HSF30 (HSF30) from Solanum peruvianum (Peruvian tomato).